A 972-amino-acid polypeptide reads, in one-letter code: Fibroblast growth factor receptor (972 aa).

An N-terminal signal peptide occupies residues 1 to 43 (MSLPRCPRTRTVMFSRTLTRCYPQRTLWIAILCVICSWTLSTA). The Extracellular segment spans residues 44 to 547 (GATTIRDKEV…NNMQPTSKTQ (504 aa)). The Fibronectin type-III domain occupies 57-152 (APQDLTAIPV…YIEASGTPPI (96 aa)). 12 N-linked (GlcNAc...) asparagine glycosylation sites follow: Asn109, Asn121, Asn191, Asn203, Asn239, Asn272, Asn315, Asn390, Asn398, Asn419, Asn422, and Asn460. The Ig-like C2-type 1 domain maps to 150-242 (PPIPPTLRRN…GQPIHVNFTL (93 aa)). An intrachain disulfide couples Cys176 to Cys226. 2 Ig-like C2-type domains span residues 282-374 (PRFT…YDVK) and 383-517 (PIMS…AYLD). Cys306 and Cys358 are joined by a disulfide. A disulfide bridge links Cys403 with Cys501. A helical transmembrane segment spans residues 548–568 (LIIFSVVGFVVVLILVTCIAI). The Cytoplasmic segment spans residues 569-972 (LCKQTQVRHR…QTRDCCPYAN (404 aa)). The region spanning 639–925 (LTVGKTIGEG…ISVSSNQDYL (287 aa)) is the Protein kinase domain. ATP-binding positions include 645 to 653 (IGEGAFGKV) and Lys673. Asp781 serves as the catalytic Proton acceptor. Tyr812 is subject to Phosphotyrosine; by autocatalysis.

The protein belongs to the protein kinase superfamily. Tyr protein kinase family. Fibroblast growth factor receptor subfamily.

Its subcellular location is the membrane. It catalyses the reaction L-tyrosyl-[protein] + ATP = O-phospho-L-tyrosyl-[protein] + ADP + H(+). Functionally, receptor for basic fibroblast growth factor. The chain is Fibroblast growth factor receptor (FGFR) from Strongylocentrotus purpuratus (Purple sea urchin).